A 473-amino-acid polypeptide reads, in one-letter code: Pyruvate kinase (473 aa).

Arg32 is a binding site for substrate. Asn34, Ser36, Asp66, and Thr67 together coordinate K(+). 34–37 (NFSH) serves as a coordination point for ATP. Positions 73 and 155 each coordinate ATP. Glu221 is a Mg(2+) binding site. Residues Gly244, Asp245, and Thr277 each coordinate substrate. Asp245 is a Mg(2+) binding site.

Belongs to the pyruvate kinase family. Homotetramer. It depends on Mg(2+) as a cofactor. K(+) serves as cofactor.

The catalysed reaction is pyruvate + ATP = phosphoenolpyruvate + ADP + H(+). It participates in carbohydrate degradation; glycolysis; pyruvate from D-glyceraldehyde 3-phosphate: step 5/5. The sequence is that of Pyruvate kinase (pyk) from Clostridium acetobutylicum (strain ATCC 824 / DSM 792 / JCM 1419 / IAM 19013 / LMG 5710 / NBRC 13948 / NRRL B-527 / VKM B-1787 / 2291 / W).